Here is a 177-residue protein sequence, read N- to C-terminus: MASSMMASTAAAVARAGPAQSSMVPFNACRSSVPFPATRKANNNLSTLPGNGGRVSCMQVWPPEGLKKFETLSYLPPLSVEDLAKEVDYLLRNDWVPCIEFSKEGFVYRENHASPGYYDGRYWTMWKLPMFGCTDASQVIAEVEEAKKAYPEYFVRIIGFDNKRQVQCISFIAYKPT.

The N-terminal 56 residues, 1 to 56 (MASSMMASTAAAVARAGPAQSSMVPFNACRSSVPFPATRKANNNLSTLPGNGGRVS), are a transit peptide targeting the chloroplast.

This sequence belongs to the RuBisCO small chain family. Heterohexadecamer of 8 large and 8 small subunits.

It localises to the plastid. It is found in the chloroplast. Its function is as follows. RuBisCO catalyzes two reactions: the carboxylation of D-ribulose 1,5-bisphosphate, the primary event in carbon dioxide fixation, as well as the oxidative fragmentation of the pentose substrate. Both reactions occur simultaneously and in competition at the same active site. Although the small subunit is not catalytic it is essential for maximal activity. The sequence is that of Ribulose bisphosphate carboxylase small subunit, chloroplastic 3 from Lemna gibba (Swollen duckweed).